A 213-amino-acid chain; its full sequence is MQLKNPILGLCQQSTFMLSAAKVDQCPDDEGFEVAFAGRSNAGKSSALNTLTHASLARTSKTPGRTQLLNFFKLDDDRRLVDLPGYGYAKVPIPLKLHWQRHLEAYLGGRESLKGLILMMDIRHPMTDFDLLMLDWAVASGMPMHILLTKADKLTYGAAKNTLLKVQSEIRKGWGDAITIQLFSAPKRMGLEDAYTALAGWMELADKGAEIAE.

The region spanning 30–204 (EGFEVAFAGR…YTALAGWMEL (175 aa)) is the EngB-type G domain. GTP-binding positions include 38–45 (GRSNAGKS), 64–68 (GRTQL), 82–85 (DLPG), 149–152 (TKAD), and 182–185 (LFSA). Residues S45 and T66 each coordinate Mg(2+).

The protein belongs to the TRAFAC class TrmE-Era-EngA-EngB-Septin-like GTPase superfamily. EngB GTPase family. The cofactor is Mg(2+).

Necessary for normal cell division and for the maintenance of normal septation. In Pseudomonas fluorescens (strain SBW25), this protein is Probable GTP-binding protein EngB.